A 191-amino-acid polypeptide reads, in one-letter code: Fe/S biogenesis protein NfuA (191 aa).

The [4Fe-4S] cluster site is built by C149 and C152.

Belongs to the NfuA family. In terms of assembly, homodimer. The cofactor is [4Fe-4S] cluster.

Its function is as follows. Involved in iron-sulfur cluster biogenesis. Binds a 4Fe-4S cluster, can transfer this cluster to apoproteins, and thereby intervenes in the maturation of Fe/S proteins. Could also act as a scaffold/chaperone for damaged Fe/S proteins. This is Fe/S biogenesis protein NfuA from Pectobacterium atrosepticum (strain SCRI 1043 / ATCC BAA-672) (Erwinia carotovora subsp. atroseptica).